The primary structure comprises 712 residues: Polyribonucleotide nucleotidyltransferase (712 aa).

The Mg(2+) site is built by D487 and D493. The region spanning 554 to 613 (PKIITMTINPDKIRDVIGPSGKQINKIIEETGVKIDIEQDGTVFISSINQEMNDKAKKII) is the KH domain. An S1 motif domain is found at 623–691 (GEIYEGKVKR…KQGRVNLSRK (69 aa)).

It belongs to the polyribonucleotide nucleotidyltransferase family. It depends on Mg(2+) as a cofactor.

It localises to the cytoplasm. The catalysed reaction is RNA(n+1) + phosphate = RNA(n) + a ribonucleoside 5'-diphosphate. Involved in mRNA degradation. Catalyzes the phosphorolysis of single-stranded polyribonucleotides processively in the 3'- to 5'-direction. This is Polyribonucleotide nucleotidyltransferase from Bacillus cereus (strain 03BB102).